A 170-amino-acid polypeptide reads, in one-letter code: NADH-quinone oxidoreductase subunit B (170 aa).

[4Fe-4S] cluster-binding residues include Cys-46, Cys-47, Cys-111, and Cys-141.

It belongs to the complex I 20 kDa subunit family. In terms of assembly, NDH-1 is composed of 14 different subunits. Subunits NuoB, C, D, E, F, and G constitute the peripheral sector of the complex. The cofactor is [4Fe-4S] cluster.

The protein localises to the cell membrane. The enzyme catalyses a quinone + NADH + 5 H(+)(in) = a quinol + NAD(+) + 4 H(+)(out). Its function is as follows. NDH-1 shuttles electrons from NADH, via FMN and iron-sulfur (Fe-S) centers, to quinones in the respiratory chain. The immediate electron acceptor for the enzyme in this species is believed to be a menaquinone. Couples the redox reaction to proton translocation (for every two electrons transferred, four hydrogen ions are translocated across the cytoplasmic membrane), and thus conserves the redox energy in a proton gradient. This chain is NADH-quinone oxidoreductase subunit B, found in Geobacillus thermodenitrificans (strain NG80-2).